The chain runs to 141 residues: MEDKIEFMAKHKKWFVVKKLKIDENTEDIEIARLLASIDETVLNKIPEYLPFDMNKLYEIADGIYQKKKGRITEEEIAEVLKKLKSPATTRKLNEITESKEGKEILKAILNNIILERLGIQTRVSPKVIEKYIENSQSSNR.

This is an uncharacterized protein from Methanocaldococcus jannaschii (strain ATCC 43067 / DSM 2661 / JAL-1 / JCM 10045 / NBRC 100440) (Methanococcus jannaschii).